A 152-amino-acid chain; its full sequence is UPF0225 protein YchJ (152 aa).

The protein belongs to the UPF0225 family.

The chain is UPF0225 protein YchJ (ychJ) from Salmonella typhimurium (strain LT2 / SGSC1412 / ATCC 700720).